A 273-amino-acid polypeptide reads, in one-letter code: Type III pantothenate kinase (273 aa).

Position 7-14 (7-14 (DVGNTAIK)) interacts with ATP. Residues Phe-119 and 124 to 127 (GIDR) each bind substrate. Catalysis depends on Asp-126, which acts as the Proton acceptor. Asp-146 is a K(+) binding site. Thr-149 serves as a coordination point for ATP. Thr-206 contributes to the substrate binding site.

Belongs to the type III pantothenate kinase family. In terms of assembly, homodimer. The cofactor is NH4(+). Requires K(+) as cofactor.

It is found in the cytoplasm. It carries out the reaction (R)-pantothenate + ATP = (R)-4'-phosphopantothenate + ADP + H(+). The protein operates within cofactor biosynthesis; coenzyme A biosynthesis; CoA from (R)-pantothenate: step 1/5. In terms of biological role, catalyzes the phosphorylation of pantothenate (Pan), the first step in CoA biosynthesis. The sequence is that of Type III pantothenate kinase from Rhodopirellula baltica (strain DSM 10527 / NCIMB 13988 / SH1).